We begin with the raw amino-acid sequence, 449 residues long: MTEKVTKLALASRLIVLLVQLVANGALPEHKPDVFRMPVSSDQNASWIDKVIKRCLGGLRHWDGEYFLHIAENLYSYENTLAFYPLYPVVVRHVGQAVEAIGISLSQESILLVVAVALNFWLFCESANLLFQLTQVLFNDLNKSWNAALIYCFNPATIFFTAAYSETFFAYSSLHLMLECSKPTGSFRYLRLGTALAACLLCRSNGLITLGYPLYFFGRQLLLKNKEPNTCMQLTQMTLTILGAIGILHTYYFYIYRLYCLPNTRPNHPQHIVDYAVERKYLLSGQGSEGSPWCQYTLPFPYTYVQSHYWDVGFLRYYKWKQLPNFLLALPMLSFMHWHCYDYMQHLAKAVWAKLTPSGFKELIRDHTTFPFVLHAAILTLVCTVYVHIQVSTRLLASATPVFYWFAADHMPKTLAQLKLRSKAGALFVWCTTYSLVGTVLFSNNYPWT.

Over 1–7 (MTEKVTK) the chain is Cytoplasmic. Residues 8 to 28 (LALASRLIVLLVQLVANGALP) traverse the membrane as a helical segment. At 29-82 (EHKPDVFRMPVSSDQNASWIDKVIKRCLGGLRHWDGEYFLHIAENLYSYENTLA) the chain is on the lumenal side. A glycan (N-linked (GlcNAc...) asparagine) is linked at Asn44. The chain crosses the membrane as a helical span at residues 83–103 (FYPLYPVVVRHVGQAVEAIGI). Residues 104-109 (SLSQES) are Cytoplasmic-facing. A helical transmembrane segment spans residues 110–130 (ILLVVAVALNFWLFCESANLL). Topologically, residues 131–148 (FQLTQVLFNDLNKSWNAA) are lumenal. N-linked (GlcNAc...) asparagine glycosylation occurs at Asn142. Residues 149–169 (LIYCFNPATIFFTAAYSETFF) traverse the membrane as a helical segment. Residues 170–196 (AYSSLHLMLECSKPTGSFRYLRLGTAL) are Cytoplasmic-facing. The chain crosses the membrane as a helical span at residues 197–217 (AACLLCRSNGLITLGYPLYFF). Topologically, residues 218–235 (GRQLLLKNKEPNTCMQLT) are lumenal. A helical transmembrane segment spans residues 236-256 (QMTLTILGAIGILHTYYFYIY). The Cytoplasmic segment spans residues 257-368 (RLYCLPNTRP…GFKELIRDHT (112 aa)). A helical transmembrane segment spans residues 369-389 (TFPFVLHAAILTLVCTVYVHI). At 390-423 (QVSTRLLASATPVFYWFAADHMPKTLAQLKLRSK) the chain is on the lumenal side. A helical membrane pass occupies residues 424-444 (AGALFVWCTTYSLVGTVLFSN). Residues 445–449 (NYPWT) lie on the Cytoplasmic side of the membrane.

Belongs to the PIGV family.

Its subcellular location is the endoplasmic reticulum membrane. It functions in the pathway glycolipid biosynthesis; glycosylphosphatidylinositol-anchor biosynthesis. Its function is as follows. Mannosyltransferase involved in glycosylphosphatidylinositol-anchor biosynthesis. Transfers the second mannose to the glycosylphosphatidylinositol during GPI precursor assembly. Required for the GPI-mediated endoplasmic reticulum exit and proper targeting to the cell surface of chp. Required for GPI-mediated membrane attachment of chp, qsm and Cont. Essential for microvillar stability in the rhabdomere. This is GPI mannosyltransferase 2 from Drosophila melanogaster (Fruit fly).